Here is a 141-residue protein sequence, read N- to C-terminus: VLTDEDKARVRASWVPVGKNAELYGSETLTRMFAAHPTTKTYFPHFDLSPGSNNLRAHGKKVIDAITEAVNNLDDVAGTLSKLSDLHAQKLRVDPVNFKLLAHCLLVTIAAHNGGVLKPEVIVSLDKFLGDLSKDLVSKYR.

In terms of domain architecture, Globin spans 1–141 (VLTDEDKARV…LSKDLVSKYR (141 aa)). Residue H58 coordinates O2. H87 lines the heme b pocket.

Belongs to the globin family. Heterotetramer of two alpha chains and two beta chains. Red blood cells.

Functionally, involved in oxygen transport from the lung to the various peripheral tissues. This chain is Hemoglobin subunit alpha-1, found in Naja naja (Indian cobra).